Here is a 778-residue protein sequence, read N- to C-terminus: Arf-GAP with coiled-coil, ANK repeat and PH domain-containing protein 2 (778 aa).

The region spanning 1-226 (MKMTVDFEEC…MKDLGAQLDR (226 aa)) is the BAR domain. Positions 266 to 361 (GIVMEGYLFK…WIKAVQTSIA (96 aa)) constitute a PH domain. Residues 371-391 (SEKLDKKSSPSTGSLDSGNES) form a disordered region. A compositionally biased stretch (polar residues) spans 379–388 (SPSTGSLDSG). 2 positions are modified to phosphoserine: Ser384 and Ser387. In terms of domain architecture, Arf-GAP spans 399–520 (ESALQRVQCI…KFVDKYSISL (122 aa)). The segment at 414-437 (CCDCGLADPRWASINLGITLCIEC) adopts a C4-type zinc-finger fold. Phosphoserine is present on Ser521. Residues 540–599 (SISKFGPGDQVRASAQSSVRSNDSGIQQSSDDGRESLPSTVSANSLYEPEGERQDSSMFL) form a disordered region. A compositionally biased stretch (polar residues) spans 552-569 (ASAQSSVRSNDSGIQQSS). Phosphoserine occurs at positions 581 and 584. ANK repeat units lie at residues 640–669 (NKAT…NVNQ), 673–702 (QGRG…NQHA), and 706–735 (EGKD…NEEM). Tyr742 bears the Phosphotyrosine mark. At Ser775 the chain carries Phosphoserine.

As to quaternary structure, interacts (via KANK domains) with RAB35 (GTP-bound form); the interaction is direct and probably recruits ACAP2 to membranes including plasma membrane. Interacts with MICALL1; the interaction is indirect through RAB35. Widely expressed. Highest level in lung.

Its subcellular location is the cell membrane. It localises to the endosome membrane. With respect to regulation, GAP activity stimulated by phosphatidylinositol 4,5-bisphosphate (PIP2) and phosphatidic acid. In terms of biological role, GTPase-activating protein (GAP) for ADP ribosylation factor 6 (ARF6). Doesn't show GAP activity for RAB35. The chain is Arf-GAP with coiled-coil, ANK repeat and PH domain-containing protein 2 (ACAP2) from Homo sapiens (Human).